The following is a 299-amino-acid chain: MTMPTLSALQHRLAQLAEQKNEPLTLAIIEQLKQQSYQGALSAPLVQQFCQQFSLSKIELGLGCVPIAACYALTPVSHFCVGAVAIGLSGSFYFGANQEFAGIAMQQTVHAEQSAISHAWLAGEGAISDMVVNCTPCGHCRQFMNELNTATTLQIHLPHRQHNTLQQYLIDAFGPKDLNIANVLFDQQHIVLPLQGDALVQATIKEAQQAYAPYSQAVSAVALQVGEQIICGRYAENAAFNPSLLPLQSALNYRRFLGLSDVAVSRVVMVEKRAVLSHYHMSKALAETALGLTLEYIAV.

CMP/dCMP-type deaminase domains lie at 56–176 and 194–299; these read SKIE…FGPK and LQGD…YIAV. A substrate-binding site is contributed by 97–99; the sequence is NQE. Position 110 (H110) interacts with Zn(2+). E112 functions as the Proton donor in the catalytic mechanism. C137 and C140 together coordinate Zn(2+).

Belongs to the cytidine and deoxycytidylate deaminase family. As to quaternary structure, homodimer. Zn(2+) serves as cofactor.

It catalyses the reaction cytidine + H2O + H(+) = uridine + NH4(+). It carries out the reaction 2'-deoxycytidine + H2O + H(+) = 2'-deoxyuridine + NH4(+). In terms of biological role, this enzyme scavenges exogenous and endogenous cytidine and 2'-deoxycytidine for UMP synthesis. This is Cytidine deaminase from Haemophilus ducreyi (strain 35000HP / ATCC 700724).